We begin with the raw amino-acid sequence, 368 residues long: Phospho-N-acetylmuramoyl-pentapeptide-transferase (368 aa).

9 helical membrane-spanning segments follow: residues 23–43 (YITF…LVFG), 72–92 (IPTM…LLWA), 94–114 (IAEP…AVGF), 139–159 (VALG…SVLL), 170–190 (ITVD…TAVS), 201–221 (GLAA…AYLT), 238–258 (AGEV…FLWF), 265–286 (VFMG…ALLI), and 345–365 (KIVI…LLTL).

Belongs to the glycosyltransferase 4 family. MraY subfamily. Mg(2+) is required as a cofactor.

It localises to the cell inner membrane. The enzyme catalyses UDP-N-acetyl-alpha-D-muramoyl-L-alanyl-gamma-D-glutamyl-meso-2,6-diaminopimeloyl-D-alanyl-D-alanine + di-trans,octa-cis-undecaprenyl phosphate = di-trans,octa-cis-undecaprenyl diphospho-N-acetyl-alpha-D-muramoyl-L-alanyl-D-glutamyl-meso-2,6-diaminopimeloyl-D-alanyl-D-alanine + UMP. The protein operates within cell wall biogenesis; peptidoglycan biosynthesis. Functionally, catalyzes the initial step of the lipid cycle reactions in the biosynthesis of the cell wall peptidoglycan: transfers peptidoglycan precursor phospho-MurNAc-pentapeptide from UDP-MurNAc-pentapeptide onto the lipid carrier undecaprenyl phosphate, yielding undecaprenyl-pyrophosphoryl-MurNAc-pentapeptide, known as lipid I. This chain is Phospho-N-acetylmuramoyl-pentapeptide-transferase, found in Chloroherpeton thalassium (strain ATCC 35110 / GB-78).